Reading from the N-terminus, the 309-residue chain is Probable 2,4-dienoyl-CoA reductase decr-1.2 [(3E)-enoyl-CoA-producing] (309 aa).

NADP(+) contacts are provided by residues 28-60, 32-37, R57, and D83; these read VLVT…RRME and GGGTGI. R57 contributes to the substrate binding site. Residues F116 and S124 each contribute to the substrate site. Catalysis depends on Y166, which acts as the Proton acceptor. NADP(+) is bound by residues K181 and 207–210; that span reads PGPI. R218 contributes to the substrate binding site.

This sequence belongs to the short-chain dehydrogenases/reductases (SDR) family. 2,4-dienoyl-CoA reductase subfamily.

The enzyme catalyses a (2E,4E)-dienoyl-CoA + NADPH + H(+) = a 4,5-saturated-(3E)-enoyl-CoA + NADP(+). The catalysed reaction is a (2E,4Z)-dienoyl-CoA + NADPH + H(+) = a 4,5-saturated-(3E)-enoyl-CoA + NADP(+). Auxiliary enzyme of beta-oxidation. It participates in the metabolism of unsaturated fatty enoyl-CoA esters having double bonds in both even- and odd-numbered positions. Catalyzes the NADP-dependent reduction of 2,4-dienoyl-CoA to yield trans-3-enoyl-CoA. The polypeptide is Probable 2,4-dienoyl-CoA reductase decr-1.2 [(3E)-enoyl-CoA-producing] (Caenorhabditis elegans).